A 433-amino-acid polypeptide reads, in one-letter code: MKVLVIGSGGREHAIVEALARSEYHPKIYAVMGNANPGIRRRAEDYLLEKETNVPAIVQYAQDCNVDMAIIGPESPLAAGLADELELNGIPVVGPRKDAARIEFDKAWTREFMARNNIKGLPKFKVYDDYDDACRYLEDNPDVVVKPAGLTGGKGVKVMGEHMHTLEEAREYVKSVLEHDRVVIEERLKGEEVTIMAFVDGKHVAPMPTVQDHKRAYEDDQGPNTGGMGSYTDNIDLLPFMTLDDYNEGVAIMEQTVKAMEKDVGVPYKGVLYGQFMITRDGMKVVEFNARFGDPEAMNVLSLLKTDFVDICEAIVDGSLDKLKIEFERSATVCKYVVPAGYPDNPVKDAPLTVVEKPEYLVYYASVNERDGKVYTTSSRSLAIVGVADTIADAEILSEEGLSNVQGEFHCRHDIGKERLIRKRIEHMDAIRG.

Positions 111 to 317 constitute an ATP-grasp domain; sequence EFMARNNIKG…FVDICEAIVD (207 aa). 138 to 194 provides a ligand contact to ATP; that stretch reads EDNPDVVVKPAGLTGGKGVKVMGEHMHTLEEAREYVKSVLEHDRVVIEERLKGEEVT. Mg(2+)-binding residues include Gln275, Glu287, and Asn289. Mn(2+) contacts are provided by Gln275, Glu287, and Asn289.

Belongs to the GARS family. Mg(2+) serves as cofactor. Mn(2+) is required as a cofactor.

The catalysed reaction is 5-phospho-beta-D-ribosylamine + glycine + ATP = N(1)-(5-phospho-beta-D-ribosyl)glycinamide + ADP + phosphate + H(+). The protein operates within purine metabolism; IMP biosynthesis via de novo pathway; N(1)-(5-phospho-D-ribosyl)glycinamide from 5-phospho-alpha-D-ribose 1-diphosphate: step 2/2. This Methanocella arvoryzae (strain DSM 22066 / NBRC 105507 / MRE50) protein is Phosphoribosylamine--glycine ligase.